A 698-amino-acid chain; its full sequence is Elongation factor G (698 aa).

The region spanning A10–L285 is the tr-type G domain. Residues A19–T26, D83–H87, and N137–D140 each bind GTP.

It belongs to the TRAFAC class translation factor GTPase superfamily. Classic translation factor GTPase family. EF-G/EF-2 subfamily.

The protein localises to the cytoplasm. Its function is as follows. Catalyzes the GTP-dependent ribosomal translocation step during translation elongation. During this step, the ribosome changes from the pre-translocational (PRE) to the post-translocational (POST) state as the newly formed A-site-bound peptidyl-tRNA and P-site-bound deacylated tRNA move to the P and E sites, respectively. Catalyzes the coordinated movement of the two tRNA molecules, the mRNA and conformational changes in the ribosome. In Frankia alni (strain DSM 45986 / CECT 9034 / ACN14a), this protein is Elongation factor G.